Consider the following 1112-residue polypeptide: Plasma membrane calcium-transporting ATPase 2 (1112 aa).

The Cytoplasmic segment spans residues 1 to 94 (MGDMSNSDFY…NLIPPKKPKT (94 aa)). A helical transmembrane segment spans residues 95 to 115 (FLQLVWEALQDVTLIILEIAA). The Extracellular portion of the chain corresponds to 116-152 (LISLGLSFYHPPGETGGESCGAAAGGVEDEGEADAGW). A helical membrane pass occupies residues 153–173 (IEGAAILLSVVCVVLVTAFND). Topologically, residues 174-373 (WSKEKQFRGL…KEKSVLQGKL (200 aa)) are cytoplasmic. Residues 298 to 311 (EKKEKKGGAVEDGH) are compositionally biased toward basic and acidic residues. Residues 298 to 363 (EKKEKKGGAV…KERKKVSAPK (66 aa)) form a disordered region. Residues 312–327 (QNTGKMQDGNMESNQI) are compositionally biased toward polar residues. Positions 351 to 363 (ADEKERKKVSAPK) are enriched in basic and acidic residues. Residues 374–393 (TKLAVQIGKAGLLMSAITVI) traverse the membrane as a helical segment. Residues 394–426 (ILVLYFAIDNFVMQKRPWMPECTPIYIQYFVKF) are Extracellular-facing. Residues 427-444 (FIIGVTVLVVAVPEGLPL) form a helical membrane-spanning segment. Over 445–858 (AVTISLAYSV…MWGRNVYDSI (414 aa)) the chain is Cytoplasmic. Asp482 (4-aspartylphosphate intermediate) is an active-site residue. 2 residues coordinate Mg(2+): Asp803 and Asp807. The chain crosses the membrane as a helical span at residues 859 to 878 (SKFLQFQLTVNVVAVIVAFT). Topologically, residues 879–888 (GACITQDSPL) are extracellular. The helical transmembrane segment at 889–909 (KAVQMLWVNLIMDTFASLALA) threads the bilayer. Topologically, residues 910-929 (TEPPTESLLKRKPYGRNKPL) are cytoplasmic. The chain crosses the membrane as a helical span at residues 930–952 (ISSTMTKNILGHGVYQLIIIFTL). Over 953-970 (LFVGEQIFDIDSGRNAPL) the chain is Extracellular. A helical transmembrane segment spans residues 971-992 (HSPPSEHYTIIFNTFVMMQLFN). The Cytoplasmic segment spans residues 993–1011 (EINARKIHGERNVFDGIFR). A helical membrane pass occupies residues 1012 to 1033 (NPIFCSIVFGTFAVQIVIVQFG). At 1034-1043 (GKPFSCQPLD) the chain is on the extracellular side. Residues 1044-1065 (LEKWMWCVFLGLGELVWGQVIA) form a helical membrane-spanning segment. Over 1066–1112 (TIPNSRLRFLRRAGQLTQKDELPEEDVNEENEEIDHAERELRRGQIL) the chain is Cytoplasmic. Positions 1086–1112 (ELPEEDVNEENEEIDHAERELRRGQIL) are disordered. Over residues 1087-1098 (LPEEDVNEENEE) the composition is skewed to acidic residues. A compositionally biased stretch (basic and acidic residues) spans 1099–1112 (IDHAERELRRGQIL). Residues 1106 to 1112 (LRRGQIL) are calmodulin-binding subdomain A.

Belongs to the cation transport ATPase (P-type) (TC 3.A.3) family. Type IIB subfamily.

Its subcellular location is the cell membrane. The enzyme catalyses Ca(2+)(in) + ATP + H2O = Ca(2+)(out) + ADP + phosphate + H(+). Its function is as follows. This magnesium-dependent enzyme catalyzes the hydrolysis of ATP coupled with the transport of calcium out of the cell. This chain is Plasma membrane calcium-transporting ATPase 2 (atp2b2), found in Oreochromis mossambicus (Mozambique tilapia).